Reading from the N-terminus, the 296-residue chain is MTIELLDSMGVVDTSNAYIRKAVAAPASDVLGRIANLETRLARSAAEIDAAQAVRYRVFVEEMKAQVAPEAGRRKRDIDSWDAICDHLLVLDTSIEGDAEEQIVGTYRLLRQDVAERTGGFYSASEFAIGELLSRHPGKRFMELGRSCVLPEYRTKRTVELLWQGNWAYALKHGIDAMFGCGSFPGVVPEEHALALSFLHHNVRVRDEWAVSARPELYRTMDLMPPEAINPKKALAALPPLIKGYMRLGAMVGDGAVVDQAFRTTDVLIVLPIGKISGRYLNYYGADAGRFSSPVS.

Belongs to the acetyltransferase family. OlsB subfamily.

It catalyses the reaction a (3R)-hydroxyacyl-[ACP] + L-ornithine = a lyso-ornithine lipid + holo-[ACP] + H(+). Its pathway is lipid metabolism. Catalyzes the first step in the biosynthesis of ornithine lipids, which are phosphorus-free membrane lipids. Catalyzes the 3-hydroxyacyl-acyl carrier protein-dependent acylation of ornithine to form lyso-ornithine lipid (LOL). The sequence is that of L-ornithine N(alpha)-acyltransferase from Rhizobium meliloti (strain 1021) (Ensifer meliloti).